A 362-amino-acid chain; its full sequence is uncharacterized protein (362 aa).

Transmembrane regions (helical) follow at residues 32–52 (GAGWACGVTVVLTPPGTVGAV), 75–95 (FVDAVLLAGGSAYGLAAADGV), 106–126 (VVMLGGVVPIVPGAVIFDLSV), 148–168 (AAVGGQDATVAVGTVGAGVGA), 176–196 (GVGTASITLESGPTVGAVVVV), 287–307 (VFALATGAVEATATADVPVAM), and 329–349 (VLVAVLAAESVAGIPTYCGMF).

Belongs to the peptidase S58 family.

It localises to the cell membrane. In terms of biological role, aminopeptidase. This is an uncharacterized protein from Mycobacterium leprae (strain TN).